The following is a 74-amino-acid chain: UPF0741 protein BcerKBAB4_5177 (74 aa).

It belongs to the UPF0741 family.

In Bacillus mycoides (strain KBAB4) (Bacillus weihenstephanensis), this protein is UPF0741 protein BcerKBAB4_5177.